A 396-amino-acid chain; its full sequence is Lysophospholipid transporter LplT (396 aa).

Over 1-17 (MSESVHTNTSLWSKGMK) the chain is Periplasmic. Residues 18 to 38 (AVIVAQFLSAFGDNALLFATL) traverse the membrane as a helical segment. Residues 39-52 (ALLKAQFYPEWSQP) are Cytoplasmic-facing. A helical transmembrane segment spans residues 53–73 (ILQMVFVGAYILLAPFVGQVA). Topologically, residues 74 to 90 (DSFAKGRVMMFANGLKL) are periplasmic. The chain crosses the membrane as a helical span at residues 91 to 111 (LGAASICFGINPFLGYTLVGV). The Cytoplasmic segment spans residues 112–144 (GAAAYSPAKYGILGELTTGSKLVKANGLMEASA). The chain crosses the membrane as a helical span at residues 145-165 (IAAILLGSVAGGVLADWHVLV). Position 166 (Ala-166) is a topological domain, periplasmic. A helical membrane pass occupies residues 167–187 (LAACALAYGGAVVANIYIPKL). Residues 188–225 (AARPGQSWNLINMTRSFLNACTSLWCNGETRFSLVGTS) lie on the Cytoplasmic side of the membrane. A helical transmembrane segment spans residues 226-246 (LFWGAGVTLRFLLVLWVPVAL). Residues 247–255 (GITDNATPT) are Periplasmic-facing. A helical transmembrane segment spans residues 256-276 (YLNAMVAIGIVVGAGAAAKLV). The Cytoplasmic portion of the chain corresponds to 277–279 (TLE). A helical membrane pass occupies residues 280 to 300 (TVSRCMPAGILIGVVVPIFSL). The Periplasmic portion of the chain corresponds to 301–303 (QHE). A helical transmembrane segment spans residues 304 to 324 (LLPAYALLMLIGVLGGFFVVP). The Cytoplasmic segment spans residues 325–342 (LNALLQERGKKSVGAGNA). Residues 343-363 (IAVQNLGENSAMLLMLGIYSL) traverse the membrane as a helical segment. The Periplasmic segment spans residues 364–365 (AV). The chain crosses the membrane as a helical span at residues 366–386 (MVGIPVVPIGIGFGALFALAI). Over 387 to 396 (TALWIWQRRH) the chain is Cytoplasmic.

This sequence belongs to the major facilitator superfamily. LplT (TC 2.A.1.42) family.

It is found in the cell inner membrane. Its function is as follows. Catalyzes the facilitated diffusion of 2-acyl-glycero-3-phosphoethanolamine (2-acyl-GPE) into the cell. This chain is Lysophospholipid transporter LplT, found in Shigella flexneri.